We begin with the raw amino-acid sequence, 585 residues long: Arginine--tRNA ligase (585 aa).

The 'HIGH' region signature appears at 131–141; that stretch reads ANPTGPMHVGH.

Belongs to the class-I aminoacyl-tRNA synthetase family. As to quaternary structure, monomer.

It is found in the cytoplasm. It catalyses the reaction tRNA(Arg) + L-arginine + ATP = L-arginyl-tRNA(Arg) + AMP + diphosphate. In Rhizobium etli (strain CIAT 652), this protein is Arginine--tRNA ligase.